Reading from the N-terminus, the 1124-residue chain is ATP-dependent DNA helicase mph1 (1124 aa).

Disordered stretches follow at residues 1–103 and 123–302; these read MFTL…EARS and QLTQ…PTQH. Acidic residues-rich tracts occupy residues 7–17 and 169–178; these read DSSDYFDDDLG and RDDEYDDDEE. Polar residues predominate over residues 210–222; that stretch reads TPIIGQQSTTIEA. Acidic residues predominate over residues 226–236; that stretch reads LLDDIPDDAFD. The segment covering 255-271 has biased composition (polar residues); the sequence is SFTQSTNRPLGVRQTTL. The 169-residue stretch at 328–496 folds into the Helicase ATP-binding domain; it reads IAQKGLFHNL…AVIDGLDISR (169 aa). 341–348 contributes to the ATP binding site; the sequence is LPTGLGKT. Residues 444 to 447 carry the DEAH box motif; it reads DEAH. The Helicase C-terminal domain maps to 666-840; that stretch reads YLKQVVLNHF…GTRFTFHDDM (175 aa). A compositionally biased stretch (basic and acidic residues) spans 855–873; sequence KRAIDIPEENTVRDLPEPK. Disordered regions lie at residues 855-923 and 1016-1124; these read KRAI…TPEP and MPKA…DSDD. 2 stretches are compositionally biased toward basic residues: residues 874 to 886 and 906 to 916; these read RRGR…PKKF and SKRRVPNKSKA.

Belongs to the DEAD box helicase family. DEAH subfamily. FANCM sub-subfamily. In terms of assembly, interacts with the MHF histone-fold complex to form the FANCM-MHF complex.

The protein resides in the nucleus. The enzyme catalyses ATP + H2O = ADP + phosphate + H(+). Functionally, ATP-dependent DNA helicase involved in DNA damage repair by homologous recombination and in genome maintenance. Capable of unwinding D-loops. Plays a role in limiting crossover recombinants during mitotic DNA double-strand break (DSB) repair. Component of a FANCM-MHF complex which promotes gene conversion at blocked replication forks, probably by reversal of the stalled fork. The polypeptide is ATP-dependent DNA helicase mph1 (Aspergillus niger (strain ATCC MYA-4892 / CBS 513.88 / FGSC A1513)).